An 87-amino-acid polypeptide reads, in one-letter code: Small ribosomal subunit protein bS20 (87 aa).

Belongs to the bacterial ribosomal protein bS20 family.

Binds directly to 16S ribosomal RNA. The chain is Small ribosomal subunit protein bS20 from Rickettsia bellii (strain OSU 85-389).